The sequence spans 496 residues: Ganglioside-induced differentiation-associated protein 2 (496 aa).

Disordered stretches follow at residues 22–45 and 252–271; these read VRDG…GLHS and PERQ…DSEE. The Macro domain occupies 44–224; the sequence is HSPFPYRNDI…TYRRLLPLYF (181 aa). Over residues 254–264 the composition is skewed to basic and acidic residues; the sequence is RQIRISEKPGG. The region spanning 329–483 is the CRAL-TRIO domain; the sequence is DLSDIAALKA…FVLDYDAREN (155 aa).

The protein belongs to the GDAP2 family.

In Xenopus tropicalis (Western clawed frog), this protein is Ganglioside-induced differentiation-associated protein 2.